Reading from the N-terminus, the 408-residue chain is LL-diaminopimelate aminotransferase (408 aa).

2 residues coordinate substrate: Tyr15 and Gly42. Residues Tyr72, 108 to 109 (SK), Tyr132, Asn187, Tyr218, and 246 to 248 (SFS) each bind pyridoxal 5'-phosphate. Residues Lys109, Tyr132, and Asn187 each coordinate substrate. Lys249 carries the N6-(pyridoxal phosphate)lysine modification. Residues Arg257 and Asn292 each contribute to the pyridoxal 5'-phosphate site. Positions 292 and 388 each coordinate substrate.

This sequence belongs to the class-I pyridoxal-phosphate-dependent aminotransferase family. LL-diaminopimelate aminotransferase subfamily. Homodimer. Requires pyridoxal 5'-phosphate as cofactor.

It catalyses the reaction (2S,6S)-2,6-diaminopimelate + 2-oxoglutarate = (S)-2,3,4,5-tetrahydrodipicolinate + L-glutamate + H2O + H(+). Its pathway is amino-acid biosynthesis; L-lysine biosynthesis via DAP pathway; LL-2,6-diaminopimelate from (S)-tetrahydrodipicolinate (aminotransferase route): step 1/1. Its function is as follows. Involved in the synthesis of meso-diaminopimelate (m-DAP or DL-DAP), required for both lysine and peptidoglycan biosynthesis. Catalyzes the direct conversion of tetrahydrodipicolinate to LL-diaminopimelate. In Synechococcus sp. (strain CC9311), this protein is LL-diaminopimelate aminotransferase.